Reading from the N-terminus, the 368-residue chain is Cobalt-precorrin-5B C(1)-methyltransferase (368 aa).

The protein belongs to the CbiD family.

The catalysed reaction is Co-precorrin-5B + S-adenosyl-L-methionine = Co-precorrin-6A + S-adenosyl-L-homocysteine. It functions in the pathway cofactor biosynthesis; adenosylcobalamin biosynthesis; cob(II)yrinate a,c-diamide from sirohydrochlorin (anaerobic route): step 6/10. Catalyzes the methylation of C-1 in cobalt-precorrin-5B to form cobalt-precorrin-6A. This is Cobalt-precorrin-5B C(1)-methyltransferase from Brucella canis (strain ATCC 23365 / NCTC 10854 / RM-666).